A 238-amino-acid polypeptide reads, in one-letter code: Fatty acid metabolism regulator protein (238 aa).

The HTH gntR-type domain maps to 6–74 (KGPASFAEKY…HGKPTRVNNF (69 aa)). The segment at residues 34-53 (ERELSELIGVTRTTLREVLQ) is a DNA-binding region (H-T-H motif).

As to quaternary structure, homodimer.

Its subcellular location is the cytoplasm. Its function is as follows. Multifunctional regulator of fatty acid metabolism. This chain is Fatty acid metabolism regulator protein, found in Shewanella putrefaciens (strain CN-32 / ATCC BAA-453).